Here is a 365-residue protein sequence, read N- to C-terminus: 2-aminoethylphosphonate--pyruvate transaminase (365 aa).

Lys194 carries the N6-(pyridoxal phosphate)lysine modification.

Belongs to the class-V pyridoxal-phosphate-dependent aminotransferase family. PhnW subfamily. As to quaternary structure, homodimer. Pyridoxal 5'-phosphate is required as a cofactor.

It carries out the reaction (2-aminoethyl)phosphonate + pyruvate = phosphonoacetaldehyde + L-alanine. Involved in phosphonate degradation. The protein is 2-aminoethylphosphonate--pyruvate transaminase of Bacillus thuringiensis (strain Al Hakam).